The sequence spans 350 residues: Integrin beta-1-binding protein 2 (350 aa).

Positions 5, 10, 24, and 27 each coordinate Zn(2+). The 60-residue stretch at Cys5–His64 folds into the CHORD 1 domain. Positions Pro28–Pro31 match the SH3-binding motif. Zn(2+)-binding residues include Cys42, Cys43, Cys59, and His64. The SH3-binding signature appears at Pro70–Pro79. A disordered region spans residues Val72–Thr92. A compositionally biased stretch (polar residues) spans Ala80–Thr92. Zn(2+) is bound by residues Cys150 and Cys155. The CHORD 2 domain maps to Cys150–His209. Residues Tyr159–Pro162 carry the SH2-binding motif. Positions 169 and 172 each coordinate Zn(2+). The SH3-binding signature appears at Pro173 to Pro176. Cys187, Cys188, Cys204, and His209 together coordinate Zn(2+). Positions Pro216 to Glu305 constitute a CS domain. The SH2-binding motif lies at Tyr235–Ile238. The tract at residues Gly317 to Glu350 is disordered. The span at Glu321–Glu350 shows a compositional bias: acidic residues.

Interacts with beta-1 integrin subunit. This interaction is regulated by divalent cations, and it occurs only in absence of calcium. In terms of tissue distribution, expressed in skeletal and cardiac muscles but not in other tissues. Is localized in rows flanking the Z line containing alpha-actinin.

May play a role during maturation and/or organization of muscles cells. This chain is Integrin beta-1-binding protein 2 (Itgb1bp2), found in Mus musculus (Mouse).